We begin with the raw amino-acid sequence, 540 residues long: Keratin, type II cytoskeletal 73 (540 aa).

Residues 1 to 131 form a head region; it reads MSRQFTYKSG…DPEIQKVRAQ (131 aa). The tract at residues 132–167 is coil 1A; sequence EREQIKVLNNKFASFIDKVRFLEQQNQVLETKWELL. The region spanning 132 to 445 is the IF rod domain; that stretch reads EREQIKVLNN…KLLEGEECRM (314 aa). The linker 1 stretch occupies residues 168 to 186; it reads QQLDLNNCKNNLEPILEGY. Residues 187–278 are coil 1B; that stretch reads ISNLRKQLET…CLYEGETAQI (92 aa). Residues 279–302 are linker 12; sequence QSHISDTSIILSMDNNRNLDLDSI. A coil 2 region spans residues 303 to 441; that stretch reads IAEVRAQYEE…ATYRKLLEGE (139 aa). The interval 442 to 540 is tail; the sequence is ECRMSGEYTN…LSSPTKKTMR (99 aa). The interval 502 to 540 is disordered; the sequence is SGNCSPRGEARTRLGSASEFRDSQGKTLALSSPTKKTMR. Positions 526–540 are enriched in polar residues; the sequence is GKTLALSSPTKKTMR.

This sequence belongs to the intermediate filament family. Heterotetramer of two type I and two type II keratins. As to expression, highly expressed in hair follicles from scalp. In hair, it is specifically present in the inner root sheath (IRS) of the hair follicle. Present in the IRS cuticle, but not in Henle or Huxley layers of the IRS. In the IRS cuticle, it is expressed between the lowermost bulb region of the cuticle and the region where Henle cells undergo abrupt terminal differentiation. Detected up to the uppermost cortex region where cuticle cells terminally differentiate (at protein level).

Has a role in hair formation. Specific component of keratin intermediate filaments in the inner root sheath (IRS) of the hair follicle. In Homo sapiens (Human), this protein is Keratin, type II cytoskeletal 73 (KRT73).